The primary structure comprises 125 residues: MARIAGIDLPNNKQLQIALTSIYGIGRSRALEICKKTGILPEKRAKDLDNEEVNKLRKIIESDYVVEGKLRSELAMSIKRLMDIACYRGLRHRKGLPLRGQRTKTNARTRKGKRKTVANKKIAAK.

The tract at residues 101 to 125 (QRTKTNARTRKGKRKTVANKKIAAK) is disordered.

Belongs to the universal ribosomal protein uS13 family. As to quaternary structure, part of the 30S ribosomal subunit. Forms a loose heterodimer with protein S19. Forms two bridges to the 50S subunit in the 70S ribosome.

Its function is as follows. Located at the top of the head of the 30S subunit, it contacts several helices of the 16S rRNA. In the 70S ribosome it contacts the 23S rRNA (bridge B1a) and protein L5 of the 50S subunit (bridge B1b), connecting the 2 subunits; these bridges are implicated in subunit movement. Contacts the tRNAs in the A and P-sites. The polypeptide is Small ribosomal subunit protein uS13 (Borrelia duttonii (strain Ly)).